A 230-amino-acid polypeptide reads, in one-letter code: 5'-methylthioadenosine/S-adenosylhomocysteine nucleosidase (230 aa).

Glutamate 12 acts as the Proton acceptor in catalysis. Substrate-binding positions include glycine 78, methionine 153, and 174 to 175 (ME). The active-site Proton donor is aspartate 198.

The protein belongs to the PNP/UDP phosphorylase family. MtnN subfamily.

It carries out the reaction S-adenosyl-L-homocysteine + H2O = S-(5-deoxy-D-ribos-5-yl)-L-homocysteine + adenine. It catalyses the reaction S-methyl-5'-thioadenosine + H2O = 5-(methylsulfanyl)-D-ribose + adenine. The catalysed reaction is 5'-deoxyadenosine + H2O = 5-deoxy-D-ribose + adenine. It functions in the pathway amino-acid biosynthesis; L-methionine biosynthesis via salvage pathway; S-methyl-5-thio-alpha-D-ribose 1-phosphate from S-methyl-5'-thioadenosine (hydrolase route): step 1/2. Functionally, catalyzes the irreversible cleavage of the glycosidic bond in both 5'-methylthioadenosine (MTA) and S-adenosylhomocysteine (SAH/AdoHcy) to adenine and the corresponding thioribose, 5'-methylthioribose and S-ribosylhomocysteine, respectively. Also cleaves 5'-deoxyadenosine, a toxic by-product of radical S-adenosylmethionine (SAM) enzymes, into 5-deoxyribose and adenine. This is 5'-methylthioadenosine/S-adenosylhomocysteine nucleosidase from Lysinibacillus sphaericus (strain C3-41).